A 75-amino-acid chain; its full sequence is uncharacterized protein (75 aa).

The LysM domain maps to 29-72 (EVYHVESGDTLWTIAKSFEIPVQQLMNLNKLSSDRIYPGQIIKI).

This is an uncharacterized protein from Bacillus subtilis (strain 168).